The chain runs to 890 residues: Translation initiation factor IF-2 (890 aa).

A disordered region spans residues 45-304 (LIDHLNQKNS…LQQGFQKPAQ (260 aa)). Positions 67–81 (STLNIPGTGGKSKSV) are enriched in polar residues. The segment covering 92 to 217 (VKRDPQEAER…RMAEENKWID (126 aa)) has biased composition (basic and acidic residues). Residues 252 to 266 (GRGRNAKAARPKKGN) are compositionally biased toward basic residues. A compositionally biased stretch (basic and acidic residues) spans 267-280 (KHAESKADREEARA). Positions 389–558 (PRAPVVTIMG…LLQAEVLELK (170 aa)) constitute a tr-type G domain. The interval 398-405 (GHVDHGKT) is G1. Residue 398-405 (GHVDHGKT) coordinates GTP. The tract at residues 423 to 427 (GITQH) is G2. Positions 444-447 (DTPG) are G3. Residues 444–448 (DTPGH) and 498–501 (NKID) contribute to the GTP site. The G4 stretch occupies residues 498–501 (NKID). The segment at 534–536 (SAK) is G5. K808 is modified (N6-acetyllysine).

It belongs to the TRAFAC class translation factor GTPase superfamily. Classic translation factor GTPase family. IF-2 subfamily.

The protein localises to the cytoplasm. In terms of biological role, one of the essential components for the initiation of protein synthesis. Protects formylmethionyl-tRNA from spontaneous hydrolysis and promotes its binding to the 30S ribosomal subunits. Also involved in the hydrolysis of GTP during the formation of the 70S ribosomal complex. The sequence is that of Translation initiation factor IF-2 from Escherichia coli O81 (strain ED1a).